The primary structure comprises 87 residues: MKPGIHPDYREVVFQDMSNGFKFITRSTIQTRETIDHEGKTYPLAKIEVSSESHSFYTGQQKIMDTAGRVEKFKNKFGARASGKVAK.

The protein belongs to the bacterial ribosomal protein bL31 family. Type B subfamily. Part of the 50S ribosomal subunit.

The sequence is that of Large ribosomal subunit protein bL31B from Burkholderia vietnamiensis (strain G4 / LMG 22486) (Burkholderia cepacia (strain R1808)).